The primary structure comprises 1228 residues: DNA repair protein rad5 (1228 aa).

4 disordered regions span residues 1–96, 194–242, 280–302, and 445–474; these read MDRH…GTLT, PPVR…VLPS, QPPT…PRVS, and KAMD…QELE. The span at 34-43 shows a compositional bias: low complexity; it reads PSSSPQFSAP. Residues 70–83 are compositionally biased toward acidic residues; sequence HNDDDDDDDDDDDE. Positions 211–237 are enriched in polar residues; it reads PKKSSTSQARSRSHAQAQPQPQSNTPT. Over residues 445–454 the composition is skewed to basic and acidic residues; the sequence is KAMDKAKAGD. The segment covering 465–474 has biased composition (acidic residues); that stretch reads EEAEEGQELE. Residues 574–784 enclose the Helicase ATP-binding domain; the sequence is PKQEQHCLGG…FSLVRFLRVE (211 aa). 587–594 serves as a coordination point for ATP; it reads DEMGLGKT. The short motif at 735 to 738 is the DEAH box element; that stretch reads DEAH. The RING-type zinc finger occupies 967–1012; it reads CPICAEEPMIDQAVTGCWHSACKKCLLDYIKHQTDRNEVPRCFQCR. The region spanning 1060–1216 is the Helicase C-terminal domain; the sequence is ALISHLRTLR…MMSDEEKKMQ (157 aa).

This sequence belongs to the SNF2/RAD54 helicase family.

It is found in the cytoplasm. The protein resides in the nucleus. Functionally, probable helicase, member of the UBC2/RAD6 epistasis group. Functions with DNA repair protein uvs-2/rad18 in error-free postreplication DNA repair. Involved in the maintenance of wild-type rates of instability of simple repetitive sequences such as poly(GT) repeats. Seems to be involved in maintaining a balance which acts in favor of error-prone non-homologous joining during DNA double-strand breaks repairs. This Neurospora crassa (strain ATCC 24698 / 74-OR23-1A / CBS 708.71 / DSM 1257 / FGSC 987) protein is DNA repair protein rad5 (mus-41).